We begin with the raw amino-acid sequence, 166 residues long: Large ribosomal subunit protein uL10 (166 aa).

This sequence belongs to the universal ribosomal protein uL10 family. As to quaternary structure, part of the ribosomal stalk of the 50S ribosomal subunit. The N-terminus interacts with L11 and the large rRNA to form the base of the stalk. The C-terminus forms an elongated spine to which L12 dimers bind in a sequential fashion forming a multimeric L10(L12)X complex.

In terms of biological role, forms part of the ribosomal stalk, playing a central role in the interaction of the ribosome with GTP-bound translation factors. This chain is Large ribosomal subunit protein uL10, found in Pelagibacter ubique (strain HTCC1062).